Here is a 117-residue protein sequence, read N- to C-terminus: UPF0102 protein FTW_1281 (117 aa).

This sequence belongs to the UPF0102 family.

This chain is UPF0102 protein FTW_1281, found in Francisella tularensis subsp. tularensis (strain WY96-3418).